The sequence spans 587 residues: Aspartate--tRNA ligase (587 aa).

An L-aspartate-binding site is contributed by Glu-174. Positions 198–201 are aspartate; sequence QITK. Residue Arg-220 coordinates L-aspartate. ATP-binding positions include 220–222 and Gln-229; that span reads RDE. His-443 provides a ligand contact to L-aspartate. Glu-477 lines the ATP pocket. Arg-484 lines the L-aspartate pocket. Position 529–532 (529–532) interacts with ATP; it reads GLDR.

Belongs to the class-II aminoacyl-tRNA synthetase family. Type 1 subfamily. As to quaternary structure, homodimer.

It is found in the cytoplasm. It carries out the reaction tRNA(Asp) + L-aspartate + ATP = L-aspartyl-tRNA(Asp) + AMP + diphosphate. Its function is as follows. Catalyzes the attachment of L-aspartate to tRNA(Asp) in a two-step reaction: L-aspartate is first activated by ATP to form Asp-AMP and then transferred to the acceptor end of tRNA(Asp). The chain is Aspartate--tRNA ligase from Streptococcus pneumoniae serotype 4 (strain ATCC BAA-334 / TIGR4).